The sequence spans 140 residues: Protein archease (140 aa).

Ca(2+) is bound by residues aspartate 12, aspartate 139, and leucine 140.

This sequence belongs to the archease family.

Functionally, activates the tRNA-splicing ligase complex by facilitating the enzymatic turnover of catalytic subunit RtcB. Acts by promoting the guanylylation of RtcB, a key intermediate step in tRNA ligation. Can also alter the NTP specificity of RtcB such that ATP, dGTP or ITP is used efficiently. May also act as a chaperone or modulator of proteins involved in DNA or RNA processing. The chain is Protein archease from Methanothermobacter thermautotrophicus (strain ATCC 29096 / DSM 1053 / JCM 10044 / NBRC 100330 / Delta H) (Methanobacterium thermoautotrophicum).